The primary structure comprises 1139 residues: Solute carrier family 12 member 5 (1139 aa).

Disordered regions lie at residues 1–63 (MSRR…GKEY) and 92–116 (TNLPQGSREHEEAENNEGGKKKPVQ). The Cytoplasmic portion of the chain corresponds to 1-98 (MSRRFTVTSL…ANYTNLPQGS (98 aa)). The segment covering 19-45 (PDPESRRHSVADPRHLPGEDVKGDGNP) has biased composition (basic and acidic residues). Residues 46-55 (KESSPFINST) are compositionally biased toward polar residues. Residue T57 is modified to Phosphothreonine. The span at 98–111 (SREHEEAENNEGGK) shows a compositional bias: basic and acidic residues. A discontinuously helical transmembrane segment spans residues 99-120 (REHEEAENNEGGKKKPVQAPRM). K113 lines the K(+) pocket. Topologically, residues 121 to 129 (GTFMGVYLP) are extracellular. A helical transmembrane segment spans residues 130-151 (CLQNIFGVILFLRLTWVVGIAG). The Cytoplasmic segment spans residues 152–174 (IMESFCMVFICCSCTMLTAISMS). Residues 175–203 (AIATNGVVPAGGSYYMISRSLGPEFGGAV) form a helical membrane-spanning segment. Chloride is bound at residue A184. The Extracellular portion of the chain corresponds to 204-229 (GLCFYLGTTFAGAMYILGTIEILLAY). The next 2 helical transmembrane spans lie at 230-250 (LFPAMAIFKAEDASGEAAAML) and 251-276 (NNMRVYGTCVLTCMATVVFVGVKYVN). At 277–402 (KFALVFLGCV…ERSGMTSVGL (126 aa)) the chain is on the extracellular side. C310 and C325 are oxidised to a cystine. N314, N333, N351, and N362 each carry an N-linked (GlcNAc...) asparagine glycan. C345 and C354 are joined by a disulfide. A helical transmembrane segment spans residues 403-420 (ADGTPIDMDHPYVFSDMT). M410 contacts K(+). The chloride site is built by Y414 and V415. Residues 421 to 429 (SYFTLLVGI) are Cytoplasmic-facing. Residues 430–453 (YFPSVTGIMAGSNRSGDLRDAQKS) traverse the membrane as a helical segment. D446 serves as a coordination point for K(+). Residues 454–485 (IPTGTILAIATTSAVYISSVVLFGACIEGVVL) lie on the Extracellular side of the membrane. A helical transmembrane segment spans residues 486–513 (RDKFGEAVNGNLVVGTLAWPSPWVIVIG). Residues 514–534 (SFFSTCGAGLQSLTGAPRLLQ) lie on the Cytoplasmic side of the membrane. Helical transmembrane passes span 535–555 (AISRDGIVPFLQVFGHGKANG) and 556–578 (EPTWALLLTACICEIGILIASLD). E569 contacts chloride. Residues 579–592 (EVAPILSMFFLMCY) are Cytoplasmic-facing. 2 consecutive transmembrane segments (helical) span residues 593 to 615 (MFVNLACAVQTLLRTPNWRPRFR) and 616 to 632 (YYHWTLSFLGMSLCLAL). The Cytoplasmic segment spans residues 633 to 1139 (MFICSWYYAL…GGREVITIYS (507 aa)). Positions 667–681 (GIRGLSLSAARYALL) are scissor helix. A Phosphothreonine; by OXSR1 and STK39 modification is found at T929. The interval 942 to 1052 (MHLTKNERER…GPSPVSSEGI (111 aa)) is disordered. Over residues 945 to 962 (TKNEREREIQSITDESRG) the composition is skewed to basic and acidic residues. Residues 982–994 (TAGDSEEKPEEEV) are compositionally biased toward acidic residues. The span at 1003–1012 (PSCPSSSPSP) shows a compositional bias: low complexity. Over residues 1023 to 1042 (DPEKVHLTWTKDKSVAEKNK) the composition is skewed to basic and acidic residues. Phosphothreonine; by OXSR1 and STK39 is present on T1030. Phosphoserine is present on residues S1045, S1048, and S1049.

This sequence belongs to the SLC12A transporter family. K/Cl co-transporter subfamily. Homodimer; adopts a domain-swap conformation at the scissor helices connecting the transmembrane domain and C-terminal domain. Heterodimer with K-Cl cotransporters SLC12A6 and SLC12A7. Interacts with AP2A1. In terms of processing, phosphorylated at Thr-929 and Thr-1030 by OXSR1/OSR1 and STK39/SPAK downstream of WNK kinases (WNK1, WNK2, WNK3 or WNK4), inhibiting the potassium-chloride cotransport activity. Brain specific. Detected in neuronal cells.

The protein localises to the cell membrane. It is found in the cell projection. The protein resides in the dendrite. It carries out the reaction K(+)(in) + chloride(in) = K(+)(out) + chloride(out). Inhibited following phosphorylation by OXSR1/OSR1 and STK39/SPAK: phosphorylation takes place downstream of WNK kinases (WNK1, WNK2, WNK3 or WNK4) in response to hyperosmotic stress and subsequent cell shrinkage. Functionally, mediates electroneutral potassium-chloride cotransport in mature neurons and is required for neuronal Cl(-) homeostasis. As major extruder of intracellular chloride, it establishes the low neuronal Cl(-) levels required for chloride influx after binding of GABA-A and glycine to their receptors, with subsequent hyperpolarization and neuronal inhibition. Involved in the regulation of dendritic spine formation and maturation. In Homo sapiens (Human), this protein is Solute carrier family 12 member 5.